We begin with the raw amino-acid sequence, 101 residues long: NADH-quinone oxidoreductase subunit K (101 aa).

A run of 3 helical transmembrane segments spans residues 4–24, 30–50, and 62–82; these read LGHM…GIFL, IVLL…FVGF, and FVFF…AILV.

This sequence belongs to the complex I subunit 4L family. In terms of assembly, NDH-1 is composed of 14 different subunits. Subunits NuoA, H, J, K, L, M, N constitute the membrane sector of the complex.

It localises to the cell inner membrane. The catalysed reaction is a quinone + NADH + 5 H(+)(in) = a quinol + NAD(+) + 4 H(+)(out). NDH-1 shuttles electrons from NADH, via FMN and iron-sulfur (Fe-S) centers, to quinones in the respiratory chain. The immediate electron acceptor for the enzyme in this species is believed to be ubiquinone. Couples the redox reaction to proton translocation (for every two electrons transferred, four hydrogen ions are translocated across the cytoplasmic membrane), and thus conserves the redox energy in a proton gradient. This is NADH-quinone oxidoreductase subunit K from Stenotrophomonas maltophilia (strain K279a).